A 486-amino-acid chain; its full sequence is Heme A synthase COX15 (486 aa).

The N-terminal 33 residues, 1-33 (MLFRNIEVGRQAAKLLTRTSSRLAWQSIGASRN), are a transit peptide targeting the mitochondrion. At 34-85 (ISTIRQQIRKTQLYNFKKTVSIRPFSLSSPVFKPHVASESNPIESRLKTSKN) the chain is on the mitochondrial matrix side. The chain crosses the membrane as a helical span at residues 86 to 106 (VAYWLIGTSGLVFGIVVLGGL). Residues 107–170 (TRLTESGLSI…FIFFMEWIHR (64 aa)) lie on the Mitochondrial intermembrane side of the membrane. Histidine 169 is a heme o binding site. A helical transmembrane segment spans residues 171–191 (LWGRAIGAVFILPAVYFAVSK). At 192-200 (KTSGHVNKR) the chain is on the mitochondrial matrix side. A helical transmembrane segment spans residues 201–221 (LFGLAGLLGLQGFVGWWMVKS). Residues 222-243 (GLDQEQLDARKSKPTVSQYRLT) are Mitochondrial intermembrane-facing. The chain crosses the membrane as a helical span at residues 244–264 (THLGTAFFLYMGMLWTGLEIL). Heme o is bound at residue histidine 245. Residues 265–293 (RECKWIKNPVQAISLFKKLDNPAIGPMRK) are Mitochondrial matrix-facing. Residues 294–314 (ISLALLAVSFLTAMSGGMVAG) form a helical membrane-spanning segment. Over 315-364 (LDAGWVYNTWPKMGERWFPSSRELMDENFCRREDKKDLWWRNLLENPVTV) the chain is Mitochondrial intermembrane. A helical transmembrane segment spans residues 365-387 (QLVHRTCAYVAFTSVLAAHMYAI). Histidine 368 contacts heme b. At 388–402 (KKKAVIPRNAMTSLH) the chain is on the mitochondrial matrix side. The helical transmembrane segment at 403 to 423 (VMMGVVTLQATLGILTILYLV) threads the bilayer. Position 424 (proline 424) is a topological domain, mitochondrial intermembrane. Residues 425–445 (ISLASIHQAGALALLTSSLVF) traverse the membrane as a helical segment. Histidine 431 contributes to the heme b binding site. At 446–486 (ASQLRKPRAPMRNVIITLPHSSKVTSGKILSEASKLASKPL) the chain is on the mitochondrial matrix side.

This sequence belongs to the COX15/CtaA family. Type 2 subfamily. As to quaternary structure, forms 200-350 kDa oligomeric complexes independent on heme binding. In addition to form homooligomeric complexes, a portion also associates with the mitochondrial respiratory supercomplexes. Interacts with CcO assembly factors PET117, SHY1, COA3 and COA1, CcO subunit COX13 and cytochrome b-c1 subunit COR1. The cofactor is heme b.

It localises to the mitochondrion inner membrane. It catalyses the reaction Fe(II)-heme o + 2 A + H2O = Fe(II)-heme a + 2 AH2. It functions in the pathway porphyrin-containing compound metabolism; heme A biosynthesis; heme A from heme O: step 1/1. In terms of biological role, catalyzes the second reaction in the biosynthesis of heme A, a prosthetic group of mitochondrial cytochrome c oxidase (CcO). Heme A is synthesized from heme B by two sequential enzymatic reactions catalyzed by heme O synthase (HOS/COX10) and heme A synthase (HAS/COX15). HAS catalyzes the conversion of heme O to heme A by two successive hydroxylations of the methyl group at C8, in a reaction that involves matrix ferredoxin YAH1 and ferredoxin reductase ARH1. The first hydroxylation forms heme I, the second hydroxylation results in an unstable dihydroxymethyl group, which spontaneously dehydrates, resulting in the formyl group of heme A. May also play a secondary role in CcO assembly. Plays a role in the maturation of COX1, the heme A-containing structural CcO subunit, possibly by interacting with the COX1-containing sub-assembly complexes that form prior to heme A insertion. May also positively regulate the upstream enzymatic reaction, farnesylation of heme B by HOS/COX10. This chain is Heme A synthase COX15, found in Saccharomyces cerevisiae (strain ATCC 204508 / S288c) (Baker's yeast).